Consider the following 472-residue polypeptide: L-fuculokinase (472 aa).

The protein belongs to the FGGY kinase family. It depends on a divalent metal cation as a cofactor.

It catalyses the reaction L-fuculose + ATP = L-fuculose 1-phosphate + ADP + H(+). It functions in the pathway carbohydrate degradation; L-fucose degradation; L-lactaldehyde and glycerone phosphate from L-fucose: step 2/3. Catalyzes the phosphorylation of L-fuculose. This chain is L-fuculokinase, found in Escherichia coli O157:H7.